We begin with the raw amino-acid sequence, 98 residues long: Large ribosomal subunit protein uL23c (98 aa).

The protein belongs to the universal ribosomal protein uL23 family. Part of the 50S ribosomal subunit.

Its subcellular location is the plastid. The protein resides in the chloroplast. In terms of biological role, binds to 23S rRNA. This is Large ribosomal subunit protein uL23c (rpl23) from Thalassiosira pseudonana (Marine diatom).